Reading from the N-terminus, the 587-residue chain is Potassium-transporting ATPase potassium-binding subunit (587 aa).

A run of 4 helical transmembrane segments spans residues 1–21 (MSTSVAGVLAVALLVAALWVT), 60–80 (PVYARSVLAFSLVSVLLLYLL), 89–109 (LNLGFGAVGPALAWNTAVSFM), and 131–151 (GLAVQNFVSAAVGIAVAIAVV). Positions 162–188 (AVGGPGGPNGPGGPGGPNGPGAGSRDD) are disordered. The segment covering 164–183 (GGPGGPNGPGGPGGPNGPGA) has biased composition (gly residues). The next 7 membrane-spanning stretches (helical) occupy residues 208-228 (IRILLPVCVIAAIVLVAGGAI), 280-300 (PTSWTNLVEIFLLLAIAFSLP), 314-334 (LAIVAVMAVLALGSFAVNAAF), 409-429 (GLYGMLVLAVVTVFVAGLMIG), 449-469 (LYFLATPAIALLGTGVAMGLP), 514-534 (ALGLAMLFGRLLPMLLVLGMA), and 557-577 (FAGMLGAIALIIVALTFFPAL).

Belongs to the KdpA family. The system is composed of three essential subunits: KdpA, KdpB and KdpC.

It is found in the cell membrane. Its function is as follows. Part of the high-affinity ATP-driven potassium transport (or Kdp) system, which catalyzes the hydrolysis of ATP coupled with the electrogenic transport of potassium into the cytoplasm. This subunit binds the extracellular potassium ions and delivers the ions to the membrane domain of KdpB through an intramembrane tunnel. In Frankia alni (strain DSM 45986 / CECT 9034 / ACN14a), this protein is Potassium-transporting ATPase potassium-binding subunit.